We begin with the raw amino-acid sequence, 202 residues long: ATP-dependent Clp protease proteolytic subunit (202 aa).

Residue Ser106 is the Nucleophile of the active site. The active site involves His131.

The protein belongs to the peptidase S14 family. Fourteen ClpP subunits assemble into 2 heptameric rings which stack back to back to give a disk-like structure with a central cavity, resembling the structure of eukaryotic proteasomes.

The protein resides in the cytoplasm. The enzyme catalyses Hydrolysis of proteins to small peptides in the presence of ATP and magnesium. alpha-casein is the usual test substrate. In the absence of ATP, only oligopeptides shorter than five residues are hydrolyzed (such as succinyl-Leu-Tyr-|-NHMec, and Leu-Tyr-Leu-|-Tyr-Trp, in which cleavage of the -Tyr-|-Leu- and -Tyr-|-Trp bonds also occurs).. Its function is as follows. Cleaves peptides in various proteins in a process that requires ATP hydrolysis. Has a chymotrypsin-like activity. Plays a major role in the degradation of misfolded proteins. The chain is ATP-dependent Clp protease proteolytic subunit from Shewanella sp. (strain MR-7).